The primary structure comprises 183 residues: Microfibrillar-associated protein 2 (183 aa).

Positions 1–17 (MRAAYLFLLFLPAGLLA) form a signal peptide, or 19. The residue at position 18 (Q18) is a Pyrrolidone carboxylic acid. Sulfotyrosine is present on residues Y47, Y48, and Y50. Residues 58–94 (SEEQFQFQSQQQVQQEVIPAPTPEPGNAELEPTEPGP) are disordered. Low complexity predominate over residues 60-74 (EQFQFQSQQQVQQEV). Residues 153–183 (CRDKFSKCGVMASSGLCQSVAASCARSCGSC) form the ShKT domain. Intrachain disulfides connect C153–C183, C160–C176, and C169–C180.

It belongs to the MFAP family. As to quaternary structure, forms a ternary complex with BGN and ELN. Interacts with FBN1 (via N-terminal domain) and FBN2. Forms intermolecular disulfide bonds either with other MAGP-1 molecules or with other components of the microfibrils. May form transglutaminase cross-links. In terms of processing, O-glycosylated.

It localises to the secreted. Its subcellular location is the extracellular space. The protein resides in the extracellular matrix. In terms of biological role, component of the elastin-associated microfibrils. In Homo sapiens (Human), this protein is Microfibrillar-associated protein 2 (MFAP2).